Here is a 277-residue protein sequence, read N- to C-terminus: Outer membrane lipoprotein 1 (277 aa).

The first 19 residues, 1–19 (MSFKKILGVALVSALALTA), serve as a signal peptide directing secretion. The N-palmitoyl cysteine moiety is linked to residue Cys-20. Residue Cys-20 is the site of S-diacylglycerol cysteine attachment.

Belongs to the NlpA lipoprotein family.

It localises to the cell outer membrane. This is Outer membrane lipoprotein 1 (plpA) from Mannheimia haemolytica (Pasteurella haemolytica).